The sequence spans 300 residues: Auxin-responsive protein IAA7 (300 aa).

Disordered regions lie at residues 1 to 80 (MGEA…DGDK) and 92 to 125 (VSHS…LASN). An EAR-like (transcriptional repression) motif is present at residues 43-47 (LSLGL). Residues 92-103 (VSHSQGKANKNK) show a composition bias toward polar residues. Positions 177-281 (APFIKINMDG…SVKRLRVLKT (105 aa)) constitute a PB1 domain.

The protein belongs to the Aux/IAA family. In terms of assembly, homodimers and heterodimers. Expressed at low levels in roots and shoots.

It is found in the nucleus. In terms of biological role, aux/IAA proteins are short-lived transcriptional factors that function as repressors of early auxin response genes at low auxin concentrations. The protein is Auxin-responsive protein IAA7 (IAA7) of Oryza sativa subsp. japonica (Rice).